The chain runs to 409 residues: Pyrophosphate--fructose 6-phosphate 1-phosphotransferase (409 aa).

Residue G14 participates in diphosphate binding. D123 provides a ligand contact to Mg(2+). Residues 151-153 (TID), 196-198 (MGR), E268, and 325-328 (YFAR) contribute to the substrate site. The Proton acceptor role is filled by D153.

This sequence belongs to the phosphofructokinase type A (PFKA) family. PPi-dependent PFK group II subfamily. Clade 'P' sub-subfamily. In terms of assembly, homotetramer. Mg(2+) is required as a cofactor.

Its subcellular location is the cytoplasm. The enzyme catalyses beta-D-fructose 6-phosphate + diphosphate = beta-D-fructose 1,6-bisphosphate + phosphate + H(+). It participates in carbohydrate degradation; glycolysis; D-glyceraldehyde 3-phosphate and glycerone phosphate from D-glucose: step 3/4. With respect to regulation, non-allosteric. Functionally, catalyzes the phosphorylation of D-fructose 6-phosphate, the first committing step of glycolysis. Uses inorganic phosphate (PPi) as phosphoryl donor instead of ATP like common ATP-dependent phosphofructokinases (ATP-PFKs), which renders the reaction reversible, and can thus function both in glycolysis and gluconeogenesis. Consistently, PPi-PFK can replace the enzymes of both the forward (ATP-PFK) and reverse (fructose-bisphosphatase (FBPase)) reactions. The polypeptide is Pyrophosphate--fructose 6-phosphate 1-phosphotransferase (Methylotuvimicrobium alcaliphilum (strain DSM 19304 / NCIMB 14124 / VKM B-2133 / 20Z) (Methylomicrobium alcaliphilum)).